We begin with the raw amino-acid sequence, 410 residues long: Beta-arrestin-2 (410 aa).

Tyrosine 48 carries the post-translational modification Phosphotyrosine. Hydroxyproline; by PHD2 occurs at positions 176 and 181. Residues 241–410 form an interaction with TRAF6 region; that stretch reads ADICLFSTAQ…KDDDCDDQFC (170 aa). Serine 361 is modified (phosphoserine). The interaction with AP2B1 stretch occupies residues 378–410; that stretch reads DTNYATDDDIVFEDFARLRLKGMKDDDCDDQFC. Threonine 383 is modified (phosphothreonine; by CaMK2). A [DE]-X(1,2)-F-X-X-[FL]-X-X-X-R motif motif is present at residues 386 to 396; the sequence is DIVFEDFARLR.

It belongs to the arrestin family. Homooligomer; the self-association is mediated by InsP6-binding. Heterooligomer with ARRB1; the association is mediated by InsP6-binding. Interacts with ADRB2 and CHRM2. Interacts with PDE4A. Interacts with PDE4D. Interacts with MAPK10, MAPK1 and MAPK3. Interacts with DRD2. Interacts with FSHR. Interacts with CLTC. Interacts with HTR2C. Interacts with CCR5. Interacts with CXCR4. Interacts with SRC. Interacts with DUSP16; the interaction is interrupted by stimulation of AGTR1 and activation of MAPK10. Interacts with CHUK; the interaction is enhanced stimulation of ADRB2. Interacts with RELA. Interacts with MDM2; the interaction is enhanced by activation of GPCRs. Interacts with SLC9A5. Interacts with TRAF6. Interacts with IGF1R. Interacts with ENG. Interacts with KIR2DL1, KIR2DL3 and KIR2DL4. Interacts with LDLR. Interacts with AP2B1. Interacts with C5AR1. Interacts with RAF1. Interacts with MAP2K1. Interacts with MAPK1. Interacts with MAPK10; the interaction enhances MAPK10 activation by MAP3K5. Interacts with MAP2K4; the interaction is enhanced by presence of MAP3K5 and MAPK10. Interacts with MAP3K5. Interacts with AKT1. Interacts with IKBKB and MAP3K14. Interacts with SMO (activated). Interacts with GSK3A and GSK3B. Associates with protein phosphatase 2A (PP2A). Interacts with CXCR4; the interaction is dependent on C-terminal phosphorylation of CXCR4 and allows activation of MAPK1 and MAPK3. Interacts with GPR143. Interacts with HCK and CXCR1 (phosphorylated). Interacts with ACKR3 and ACKR4. Interacts with ARRDC1; the interaction is direct. Interacts with GPR61, GPR62 and GPR135. Interacts (via NACHT and LRR domains) with NLRP3; this interaction is direct and inducible by omega-3 polyunsaturated fatty acids (PUFAs). Interacts with FFAR4 (via C-terminus); this interaction is stimulated by long-chain fatty acids (LCFAs). Interacts with GPR35. Interacts with GPR84. Interacts with TIGIT; this interaction inhibits the NF-kappa-B pathway. Interacts with TGFBR3. Phosphorylated at Thr-383 in the cytoplasm; probably dephosphorylated at the plasma membrane. The phosphorylation does not regulate internalization and recycling of ADRB2, interaction with clathrin or AP2B1. Post-translationally, the ubiquitination status appears to regulate the formation and trafficking of beta-arrestin-GPCR complexes and signaling. Ubiquitination appears to occur GPCR-specific. Ubiquitinated by MDM2; the ubiquitination is required for rapid internalization of ADRB2. Deubiquitinated by USP33; the deubiquitination leads to a dissociation of the beta-arrestin-GPCR complex. Stimulation of a class A GPCR, such as ADRB2, induces transient ubiquitination and subsequently promotes association with USP33. Stimulation of a class B GPCR promotes a sustained ubiquitination. Deubiquitinated by USP20; allowing USP20 to deubiquitinate TRAF6 leading to inhibition of NF-kappa-B signaling. In terms of processing, hydroxylation by PHD2 modulates the rate of internalization by slowing down recruitment to the plasma membrane and inhibiting subsequent co-internalization with class A receptors. Predominantly localized in neuronal tissues and in the spleen.

The protein resides in the cytoplasm. It is found in the nucleus. Its subcellular location is the cell membrane. It localises to the membrane. The protein localises to the clathrin-coated pit. The protein resides in the cytoplasmic vesicle. Functions in regulating agonist-mediated G-protein coupled receptor (GPCR) signaling by mediating both receptor desensitization and resensitization processes. During homologous desensitization, beta-arrestins bind to the GPRK-phosphorylated receptor and sterically preclude its coupling to the cognate G-protein; the binding appears to require additional receptor determinants exposed only in the active receptor conformation. The beta-arrestins target many receptors for internalization by acting as endocytic adapters (CLASPs, clathrin-associated sorting proteins) and recruiting the GPRCs to the adapter protein 2 complex 2 (AP-2) in clathrin-coated pits (CCPs). However, the extent of beta-arrestin involvement appears to vary significantly depending on the receptor, agonist and cell type. Internalized arrestin-receptor complexes traffic to intracellular endosomes, where they remain uncoupled from G-proteins. Two different modes of arrestin-mediated internalization occur. Class A receptors, like ADRB2, OPRM1, ENDRA, D1AR and ADRA1B dissociate from beta-arrestin at or near the plasma membrane and undergo rapid recycling. Class B receptors, like AVPR2, AGTR1, NTSR1, TRHR and TACR1 internalize as a complex with arrestin and traffic with it to endosomal vesicles, presumably as desensitized receptors, for extended periods of time. Receptor resensitization then requires that receptor-bound arrestin is removed so that the receptor can be dephosphorylated and returned to the plasma membrane. Mediates endocytosis of CCR7 following ligation of CCL19 but not CCL21. Involved in internalization of P2RY1, P2RY4, P2RY6 and P2RY11 and ATP-stimulated internalization of P2RY2. Involved in phosphorylation-dependent internalization of OPRD1 and subsequent recycling or degradation. Involved in ubiquitination of IGF1R. Beta-arrestins function as multivalent adapter proteins that can switch the GPCR from a G-protein signaling mode that transmits short-lived signals from the plasma membrane via small molecule second messengers and ion channels to a beta-arrestin signaling mode that transmits a distinct set of signals that are initiated as the receptor internalizes and transits the intracellular compartment. Acts as a signaling scaffold for MAPK pathways such as MAPK1/3 (ERK1/2) and MAPK10 (JNK3). ERK1/2 and JNK3 activated by the beta-arrestin scaffold are largely excluded from the nucleus and confined to cytoplasmic locations such as endocytic vesicles, also called beta-arrestin signalosomes. Acts as a signaling scaffold for the AKT1 pathway. GPCRs for which the beta-arrestin-mediated signaling relies on both ARRB1 and ARRB2 (codependent regulation) include ADRB2, F2RL1 and PTH1R. For some GPCRs the beta-arrestin-mediated signaling relies on either ARRB1 or ARRB2 and is inhibited by the other respective beta-arrestin form (reciprocal regulation). Increases ERK1/2 signaling in AGTR1- and AVPR2-mediated activation (reciprocal regulation). Involved in CCR7-mediated ERK1/2 signaling involving ligand CCL19. Is involved in type-1A angiotensin II receptor/AGTR1-mediated ERK activity. Is involved in type-1A angiotensin II receptor/AGTR1-mediated MAPK10 activity. Is involved in dopamine-stimulated AKT1 activity in the striatum by disrupting the association of AKT1 with its negative regulator PP2A. Involved in AGTR1-mediated chemotaxis. Appears to function as signaling scaffold involved in regulation of MIP-1-beta-stimulated CCR5-dependent chemotaxis. Involved in attenuation of NF-kappa-B-dependent transcription in response to GPCR or cytokine stimulation by interacting with and stabilizing CHUK. Suppresses UV-induced NF-kappa-B-dependent activation by interacting with CHUK. The function is promoted by stimulation of ADRB2 and dephosphorylation of ARRB2. Involved in IL8-mediated granule release in neutrophils. Involved in p53/TP53-mediated apoptosis by regulating MDM2 and reducing the MDM2-mediated degradation of p53/TP53. May serve as nuclear messenger for GPCRs. Upon stimulation of OR1D2, may be involved in regulation of gene expression during the early processes of fertilization. Also involved in regulation of receptors other than GPCRs. Involved in endocytosis of TGFBR2 and TGFBR3 and down-regulates TGF-beta signaling such as NF-kappa-B activation. Involved in endocytosis of low-density lipoprotein receptor/LDLR. Involved in endocytosis of smoothened homolog/Smo, which also requires GRK2. Involved in endocytosis of SLC9A5. Involved in endocytosis of ENG and subsequent TGF-beta-mediated ERK activation and migration of epithelial cells. Involved in Toll-like receptor and IL-1 receptor signaling through the interaction with TRAF6 which prevents TRAF6 autoubiquitination and oligomerization required for activation of NF-kappa-B and JUN. Involved in insulin resistance by acting as insulin-induced signaling scaffold for SRC, AKT1 and INSR. Involved in regulation of inhibitory signaling of natural killer cells by recruiting PTPN6 and PTPN11 to KIR2DL1. Involved in the internalization of the atypical chemokine receptor ACKR3. Acts as an adapter protein coupling FFAR4 receptor to specific downstream signaling pathways, as well as mediating receptor endocytosis. During the activation step of NLRP3 inflammasome, directly associates with NLRP3 leading to inhibition of pro-inflammatory cytokine release and inhibition of inflammation. The sequence is that of Beta-arrestin-2 (Arrb2) from Rattus norvegicus (Rat).